Consider the following 129-residue polypeptide: Follitropin subunit beta (129 aa).

The first 20 residues, Met-1–Ser-20, serve as a signal peptide directing secretion. Disulfide bonds link Cys-21–Cys-69, Cys-35–Cys-84, Cys-38–Cys-122, Cys-46–Cys-100, Cys-50–Cys-102, and Cys-105–Cys-112. Asn-25 and Asn-42 each carry an N-linked (GlcNAc...) asparagine glycan.

Belongs to the glycoprotein hormones subunit beta family. In terms of assembly, heterodimer. The active follitropin is a heterodimer composed of an alpha chain/CGA shared with other hormones and a unique beta chain/FSHB shown here.

The protein localises to the secreted. Functionally, together with the alpha chain CGA constitutes follitropin, the follicle-stimulating hormone, and provides its biological specificity to the hormone heterodimer. Binds FSHR, a G protein-coupled receptor, on target cells to activate downstream signaling pathways. Follitropin is involved in follicle development and spermatogenesis in reproductive organs. The protein is Follitropin subunit beta (FSHB) of Bubalus bubalis (Domestic water buffalo).